The chain runs to 351 residues: Biotin synthase (351 aa).

Residues 44 to 262 form the Radical SAM core domain; that stretch reads NRVQVSTLLS…LAVARIMMPK (219 aa). Residues Cys-59, Cys-63, and Cys-66 each contribute to the [4Fe-4S] cluster site. Positions 103, 134, 194, and 266 each coordinate [2Fe-2S] cluster.

This sequence belongs to the radical SAM superfamily. Biotin synthase family. As to quaternary structure, homodimer. [4Fe-4S] cluster is required as a cofactor. Requires [2Fe-2S] cluster as cofactor.

It catalyses the reaction (4R,5S)-dethiobiotin + (sulfur carrier)-SH + 2 reduced [2Fe-2S]-[ferredoxin] + 2 S-adenosyl-L-methionine = (sulfur carrier)-H + biotin + 2 5'-deoxyadenosine + 2 L-methionine + 2 oxidized [2Fe-2S]-[ferredoxin]. It functions in the pathway cofactor biosynthesis; biotin biosynthesis; biotin from 7,8-diaminononanoate: step 2/2. Catalyzes the conversion of dethiobiotin (DTB) to biotin by the insertion of a sulfur atom into dethiobiotin via a radical-based mechanism. This is Biotin synthase from Stutzerimonas stutzeri (strain A1501) (Pseudomonas stutzeri).